We begin with the raw amino-acid sequence, 289 residues long: Acetyl-coenzyme A carboxylase carboxyl transferase subunit beta (289 aa).

The CoA carboxyltransferase N-terminal domain maps to 28-289 (VMTKCPECKK…QGGEMAVWQS (262 aa)). Zn(2+) is bound by residues C32, C35, C51, and C54. A C4-type zinc finger spans residues 32-54 (CPECKKIMYTKELLKNLKVCVNC).

It belongs to the AccD/PCCB family. As to quaternary structure, acetyl-CoA carboxylase is a heterohexamer composed of biotin carboxyl carrier protein (AccB), biotin carboxylase (AccC) and two subunits each of ACCase subunit alpha (AccA) and ACCase subunit beta (AccD). Zn(2+) is required as a cofactor.

Its subcellular location is the cytoplasm. The catalysed reaction is N(6)-carboxybiotinyl-L-lysyl-[protein] + acetyl-CoA = N(6)-biotinyl-L-lysyl-[protein] + malonyl-CoA. Its pathway is lipid metabolism; malonyl-CoA biosynthesis; malonyl-CoA from acetyl-CoA: step 1/1. Its function is as follows. Component of the acetyl coenzyme A carboxylase (ACC) complex. Biotin carboxylase (BC) catalyzes the carboxylation of biotin on its carrier protein (BCCP) and then the CO(2) group is transferred by the transcarboxylase to acetyl-CoA to form malonyl-CoA. This Bacillus cereus (strain ATCC 14579 / DSM 31 / CCUG 7414 / JCM 2152 / NBRC 15305 / NCIMB 9373 / NCTC 2599 / NRRL B-3711) protein is Acetyl-coenzyme A carboxylase carboxyl transferase subunit beta.